The primary structure comprises 445 residues: O-fucosyltransferase 23 (445 aa).

A helical; Signal-anchor for type II membrane protein membrane pass occupies residues 12–34 (IFSKSVACKCLVLVGIALFYRAL). N-linked (GlcNAc...) asparagine glycosylation is found at Asn97 and Asn179. Residue 258–260 (HMR) participates in substrate binding. An N-linked (GlcNAc...) asparagine glycan is attached at Asn294. Residue 374–375 (TF) coordinates substrate. Asn424 carries N-linked (GlcNAc...) asparagine glycosylation.

The protein belongs to the glycosyltransferase GT106 family. As to expression, expressed in dry pollen grains and germinating pollen grains.

It localises to the golgi apparatus membrane. Its pathway is glycan metabolism. Its function is as follows. Probable protein O-fucosyltransferase required for correct pollen tube penetration through the stigma-style interface. May be involved in protein O-glycosylation events during pollen-pistil interactions. The sequence is that of O-fucosyltransferase 23 from Arabidopsis thaliana (Mouse-ear cress).